A 362-amino-acid chain; its full sequence is 3-isopropylmalate dehydrogenase (362 aa).

78–91 serves as a coordination point for NAD(+); that stretch reads GPKWESLPPDEQPE. Positions 99, 109, 138, and 227 each coordinate substrate. 3 residues coordinate Mg(2+): Asp227, Asp251, and Asp255. 285-297 serves as a coordination point for NAD(+); that stretch reads GSAPDIAGQGIAN.

The protein belongs to the isocitrate and isopropylmalate dehydrogenases family. LeuB type 1 subfamily. As to quaternary structure, homodimer. Requires Mg(2+) as cofactor. Mn(2+) serves as cofactor.

It localises to the cytoplasm. It catalyses the reaction (2R,3S)-3-isopropylmalate + NAD(+) = 4-methyl-2-oxopentanoate + CO2 + NADH. It functions in the pathway amino-acid biosynthesis; L-leucine biosynthesis; L-leucine from 3-methyl-2-oxobutanoate: step 3/4. Catalyzes the oxidation of 3-carboxy-2-hydroxy-4-methylpentanoate (3-isopropylmalate) to 3-carboxy-4-methyl-2-oxopentanoate. The product decarboxylates to 4-methyl-2 oxopentanoate. In Geobacter sulfurreducens (strain ATCC 51573 / DSM 12127 / PCA), this protein is 3-isopropylmalate dehydrogenase.